Reading from the N-terminus, the 245-residue chain is Increased recombination centers protein 22 (245 aa).

The N-terminal stretch at 1 to 20 (MKFLHIGLMTLMAGVSNVLA) is a signal peptide. Residues 21–188 (QEEANAEDVM…TFKLDLINQS (168 aa)) lie on the Lumenal side of the membrane. A helical transmembrane segment spans residues 189 to 209 (ISIFDPSFLSIIAVLIALVGG). Residues 210 to 245 (TVYLYSNVVAPPKKIKKKEAIPAKIDESWLPDVHKK) lie on the Cytoplasmic side of the membrane.

It belongs to the IRC22 family.

The protein localises to the endoplasmic reticulum membrane. Its function is as follows. Is probably involved in a pathway contributing to genomic integrity. This is Increased recombination centers protein 22 (IRC22) from Candida glabrata (strain ATCC 2001 / BCRC 20586 / JCM 3761 / NBRC 0622 / NRRL Y-65 / CBS 138) (Yeast).